We begin with the raw amino-acid sequence, 435 residues long: GTPase Obg (435 aa).

Residues 1–158 (MFLDTAKVSV…RQLELELKIL (158 aa)) form the Obg domain. An OBG-type G domain is found at 159-336 (ADVGLVGFPS…LLEATAELLA (178 aa)). GTP contacts are provided by residues 165 to 172 (GFPSVGKS), 190 to 194 (FTTIV), 212 to 215 (DLPG), 282 to 285 (NKMD), and 317 to 319 (SSL). Mg(2+)-binding residues include S172 and T192. The OCT domain maps to 357 to 435 (GFAAEEKAFE…IGKFEFEFVD (79 aa)).

This sequence belongs to the TRAFAC class OBG-HflX-like GTPase superfamily. OBG GTPase family. Monomer. Mg(2+) is required as a cofactor.

It is found in the cytoplasm. An essential GTPase which binds GTP, GDP and possibly (p)ppGpp with moderate affinity, with high nucleotide exchange rates and a fairly low GTP hydrolysis rate. Plays a role in control of the cell cycle, stress response, ribosome biogenesis and in those bacteria that undergo differentiation, in morphogenesis control. The chain is GTPase Obg from Streptococcus equi subsp. zooepidemicus (strain MGCS10565).